The following is a 255-amino-acid chain: 5'-nucleotidase SurE (255 aa).

A divalent metal cation-binding residues include Asp8, Asp9, Ser39, and Asn95.

This sequence belongs to the SurE nucleotidase family. A divalent metal cation is required as a cofactor.

It localises to the cytoplasm. It carries out the reaction a ribonucleoside 5'-phosphate + H2O = a ribonucleoside + phosphate. Nucleotidase that shows phosphatase activity on nucleoside 5'-monophosphates. The sequence is that of 5'-nucleotidase SurE from Herpetosiphon aurantiacus (strain ATCC 23779 / DSM 785 / 114-95).